The primary structure comprises 298 residues: Elongation factor Ts (298 aa).

Positions 79–82 (TDFV) are involved in Mg(2+) ion dislocation from EF-Tu.

Belongs to the EF-Ts family.

It localises to the cytoplasm. Associates with the EF-Tu.GDP complex and induces the exchange of GDP to GTP. It remains bound to the aminoacyl-tRNA.EF-Tu.GTP complex up to the GTP hydrolysis stage on the ribosome. This is Elongation factor Ts (tsf) from Mycoplasma pneumoniae (strain ATCC 29342 / M129 / Subtype 1) (Mycoplasmoides pneumoniae).